The sequence spans 129 residues: NADPH-dependent 7-cyano-7-deazaguanine reductase (129 aa).

Cysteine 34 (thioimide intermediate) is an active-site residue. The active-site Proton donor is the aspartate 41. Residues 56 to 58 (VEL) and 75 to 76 (HE) each bind substrate.

Belongs to the GTP cyclohydrolase I family. QueF type 1 subfamily.

The protein resides in the cytoplasm. It catalyses the reaction 7-aminomethyl-7-carbaguanine + 2 NADP(+) = 7-cyano-7-deazaguanine + 2 NADPH + 3 H(+). The protein operates within tRNA modification; tRNA-queuosine biosynthesis. In terms of biological role, catalyzes the NADPH-dependent reduction of 7-cyano-7-deazaguanine (preQ0) to 7-aminomethyl-7-deazaguanine (preQ1). The polypeptide is NADPH-dependent 7-cyano-7-deazaguanine reductase (Thioalkalivibrio sulfidiphilus (strain HL-EbGR7)).